Here is a 210-residue protein sequence, read N- to C-terminus: Large ribosomal subunit protein uL3 (210 aa).

It belongs to the universal ribosomal protein uL3 family. As to quaternary structure, part of the 50S ribosomal subunit. Forms a cluster with proteins L14 and L19.

Functionally, one of the primary rRNA binding proteins, it binds directly near the 3'-end of the 23S rRNA, where it nucleates assembly of the 50S subunit. The chain is Large ribosomal subunit protein uL3 from Geobacter metallireducens (strain ATCC 53774 / DSM 7210 / GS-15).